Here is an 80-residue protein sequence, read N- to C-terminus: Antitoxin VapB15 (80 aa).

Residues 60-80 form a disordered region; sequence DFSNDEIESFSDTDRKLADES. A Mg(2+)-binding site is contributed by Glu67. Glu67 lines the Mn(2+) pocket. The span at 71 to 80 shows a compositional bias: basic and acidic residues; sequence DTDRKLADES.

Forms a VapB15-VapC15(2) heterotrimer and a VapB15(2)-VapC15(2) heterotetramer; each toxin pair forms a homodimer which creates a channel in which the antitoxin binds. Mg(2+) is required as a cofactor. The cofactor is Mn(2+).

Functionally, antitoxin component of a type II toxin-antitoxin (TA) system. Neutralizes the toxic effect of cognate toxin VapC15. The sequence is that of Antitoxin VapB15 (vapB15) from Mycobacterium tuberculosis (strain CDC 1551 / Oshkosh).